A 179-amino-acid chain; its full sequence is Inner membrane-spanning protein YciB (179 aa).

Helical transmembrane passes span 22–42 (IYAA…YSWV), 50–70 (MALI…FFHN), 76–96 (WKVT…QWVM), 121–141 (LAWA…AFWL), and 149–169 (FKVF…GIYI).

Belongs to the YciB family.

It is found in the cell inner membrane. Its function is as follows. Plays a role in cell envelope biogenesis, maintenance of cell envelope integrity and membrane homeostasis. The chain is Inner membrane-spanning protein YciB from Shigella dysenteriae serotype 1 (strain Sd197).